Consider the following 1302-residue polypeptide: DNA-directed RNA polymerase subunit beta (1302 aa).

The protein belongs to the RNA polymerase beta chain family. In terms of assembly, the RNAP catalytic core consists of 2 alpha, 1 beta, 1 beta' and 1 omega subunit. When a sigma factor is associated with the core the holoenzyme is formed, which can initiate transcription.

The enzyme catalyses RNA(n) + a ribonucleoside 5'-triphosphate = RNA(n+1) + diphosphate. Functionally, DNA-dependent RNA polymerase catalyzes the transcription of DNA into RNA using the four ribonucleoside triphosphates as substrates. This chain is DNA-directed RNA polymerase subunit beta, found in Spiroplasma citri.